We begin with the raw amino-acid sequence, 508 residues long: Photosystem II CP47 reaction center protein (508 aa).

The next 6 membrane-spanning stretches (helical) occupy residues 21 to 36 (AVHI…WAGS), 101 to 115 (IILS…IWHW), 140 to 156 (GIHL…FGAF), 203 to 218 (IAAG…FHLS), 237 to 252 (VLSS…AFIV), and 457 to 472 (CFAL…HGAR).

It belongs to the PsbB/PsbC family. PsbB subfamily. As to quaternary structure, PSII is composed of 1 copy each of membrane proteins PsbA, PsbB, PsbC, PsbD, PsbE, PsbF, PsbH, PsbI, PsbJ, PsbK, PsbL, PsbM, PsbT, PsbX, PsbY, PsbZ, Psb30/Ycf12, at least 3 peripheral proteins of the oxygen-evolving complex and a large number of cofactors. It forms dimeric complexes. Binds multiple chlorophylls. PSII binds additional chlorophylls, carotenoids and specific lipids. serves as cofactor.

The protein localises to the plastid. It localises to the chloroplast thylakoid membrane. In terms of biological role, one of the components of the core complex of photosystem II (PSII). It binds chlorophyll and helps catalyze the primary light-induced photochemical processes of PSII. PSII is a light-driven water:plastoquinone oxidoreductase, using light energy to abstract electrons from H(2)O, generating O(2) and a proton gradient subsequently used for ATP formation. The chain is Photosystem II CP47 reaction center protein from Chara vulgaris (Common stonewort).